The following is a 49-amino-acid chain: Large ribosomal subunit protein bL33 (49 aa).

It belongs to the bacterial ribosomal protein bL33 family.

The chain is Large ribosomal subunit protein bL33 from Moorella thermoacetica (strain ATCC 39073 / JCM 9320).